We begin with the raw amino-acid sequence, 2034 residues long: Pecanex-like protein 3 (2034 aa).

2 helical membrane-spanning segments follow: residues 33-53 (CFHLYVWIFLLIFPFLLYMVL) and 54-74 (PPSLMVAGVYCLVVAVIFATI). A disordered region spans residues 96 to 118 (STMGELEEEPAQGDSNPPRDPGV). Serine 127 carries the post-translational modification Phosphoserine. A Phosphothreonine modification is found at threonine 129. 3 disordered regions span residues 193 to 242 (IGDL…PLLK), 260 to 517 (DRAL…LRPP), and 540 to 625 (VLPA…SHSR). Residues 294-303 (KAGSSDSCFS) are compositionally biased toward polar residues. Residues 305 to 319 (TDRETLSSFKSEKTN) are compositionally biased toward basic and acidic residues. Residue asparagine 319 is glycosylated (N-linked (GlcNAc...) asparagine). Position 370 is a phosphothreonine (threonine 370). The segment covering 391-409 (PSKRQPPLRRHSPPGRAPR) has biased composition (basic residues). Phosphoserine occurs at positions 392 and 431. Positions 427 to 436 (GSELSPASSL) are enriched in polar residues. The segment covering 444–460 (TDSSSSTSCYSPESSRG) has biased composition (low complexity). Positions 488 to 497 (TQRTPSTASA) are enriched in polar residues. Serine 505 bears the Phosphoserine mark. Helical transmembrane passes span 790-812 (VLENIFGVGLSSLVAFLGYLLLL), 819-836 (IWVFQFCLVIASCQYSLL), 852-872 (WVIAYSRPVYFCICCLLIWLL), 880-900 (PFPPVSLYGLTLFSASFFFCA), 903-923 (VATVFTLCFPFVFLLGLLPQV), 946-968 (SPLTAVFSLSRSLLAAALLYGFC), and 980-1000 (HVPVLFSVFCGLLVALSYHLS). Serine 1025 bears the Phosphoserine mark. 4 consecutive transmembrane segments (helical) span residues 1053-1073 (LVMCVVIAVLTFAISASTVFI), 1078-1098 (VLGFVLYALAGAVGFFTHYLL), 1244-1264 (FVLTYIAPWQITWGSAFHAFA), and 1280-1300 (LLSGLFSTPLNPLLGSAVFIM). Position 1697 is a phosphoserine (serine 1697). N-linked (GlcNAc...) asparagine glycosylation occurs at asparagine 1770. The tract at residues 1844–2034 (GGLTSLSNNP…AAQPLLEHQY (191 aa)) is disordered. The segment covering 1890–1910 (RPPPLLQWPPPRLPGPPPASP) has biased composition (pro residues). The residue at position 1909 (serine 1909) is a Phosphoserine. Positions 1925–1939 (GLLSSEGPSGKWSLG) are enriched in low complexity. A Phosphoserine modification is found at serine 1955. The span at 1969–1978 (LSLSLSLSLS) shows a compositional bias: low complexity.

This sequence belongs to the pecanex family.

Its subcellular location is the membrane. This chain is Pecanex-like protein 3, found in Homo sapiens (Human).